Here is a 109-residue protein sequence, read N- to C-terminus: Parvalbumin beta 2 (109 aa).

N-acetylalanine is present on A2. EF-hand domains lie at 39–74 and 78–109; these read KSPA…FSAG and LSDA…MIKA. Ca(2+)-binding residues include D52, D54, S56, F58, E60, E63, D91, D93, D95, K97, and E102.

Belongs to the parvalbumin family. As to quaternary structure, monomer.

Its function is as follows. In muscle, parvalbumin is thought to be involved in relaxation after contraction. It binds two calcium ions. This Gadus morhua (Atlantic cod) protein is Parvalbumin beta 2.